The following is a 68-amino-acid chain: Beta-toxin Cl13 (68 aa).

The LCN-type CS-alpha/beta domain maps to 1-66 (KEGYLVDYHT…VWPLPNKRCK (66 aa)). Disulfide bonds link C12-C65, C16-C41, C25-C46, and C29-C48. K66 carries the lysine amide modification.

The protein belongs to the long (4 C-C) scorpion toxin superfamily. Sodium channel inhibitor family. Beta subfamily. As to expression, expressed by the venom gland.

The protein resides in the secreted. Functionally, beta toxins bind voltage-independently at site-4 of sodium channels (Nav) and shift the voltage of activation toward more negative potentials thereby affecting sodium channel activation and promoting spontaneous and repetitive firing. Inhibits sodium channels Nav1.4/SCN4A, Nav1.5/SCN5A and Nav1.6/SCN8A. Also has a weak inhibitory effect on Nav1.2/SCN2A. Is lethal to mice. The chain is Beta-toxin Cl13 from Centruroides limpidus (Mexican scorpion).